A 40-amino-acid polypeptide reads, in one-letter code: U1-ectatotoxin-Eb1a subunit A (40 aa).

The protein belongs to the ectatomin family. Ectatomin-Eq subfamily. Heterodimer of subunits A and B; disulfide-linked. Expressed by the venom gland.

The protein localises to the secreted. It is found in the target cell membrane. This Ectatomma brunneum (Ant) protein is U1-ectatotoxin-Eb1a subunit A.